The sequence spans 390 residues: Bifunctional enzyme IspD/IspF (390 aa).

The tract at residues 1 to 229 (MAAGRGERAG…RQDHAVFPDI (229 aa)) is 2-C-methyl-D-erythritol 4-phosphate cytidylyltransferase. Residues 230–390 (RTGNGYDVHS…TVIYPGEVPE (161 aa)) form a 2-C-methyl-D-erythritol 2,4-cyclodiphosphate synthase region. A divalent metal cation-binding residues include aspartate 236 and histidine 238. 4-CDP-2-C-methyl-D-erythritol 2-phosphate is bound by residues 236–238 (DVH) and 262–263 (HS). Histidine 270 provides a ligand contact to a divalent metal cation. 4-CDP-2-C-methyl-D-erythritol 2-phosphate contacts are provided by residues 284–286 (DIG), 360–363 (TTNE), phenylalanine 367, and arginine 370.

This sequence in the N-terminal section; belongs to the IspD/TarI cytidylyltransferase family. IspD subfamily. The protein in the C-terminal section; belongs to the IspF family. A divalent metal cation serves as cofactor.

The enzyme catalyses 2-C-methyl-D-erythritol 4-phosphate + CTP + H(+) = 4-CDP-2-C-methyl-D-erythritol + diphosphate. It catalyses the reaction 4-CDP-2-C-methyl-D-erythritol 2-phosphate = 2-C-methyl-D-erythritol 2,4-cyclic diphosphate + CMP. It participates in isoprenoid biosynthesis; isopentenyl diphosphate biosynthesis via DXP pathway; isopentenyl diphosphate from 1-deoxy-D-xylulose 5-phosphate: step 2/6. It functions in the pathway isoprenoid biosynthesis; isopentenyl diphosphate biosynthesis via DXP pathway; isopentenyl diphosphate from 1-deoxy-D-xylulose 5-phosphate: step 4/6. In terms of biological role, bifunctional enzyme that catalyzes the formation of 4-diphosphocytidyl-2-C-methyl-D-erythritol from CTP and 2-C-methyl-D-erythritol 4-phosphate (MEP) (IspD), and catalyzes the conversion of 4-diphosphocytidyl-2-C-methyl-D-erythritol 2-phosphate (CDP-ME2P) to 2-C-methyl-D-erythritol 2,4-cyclodiphosphate (ME-CPP) with a corresponding release of cytidine 5-monophosphate (CMP) (IspF). This chain is Bifunctional enzyme IspD/IspF, found in Brucella abortus biovar 1 (strain 9-941).